The chain runs to 1387 residues: Kinesin-like protein KIF15 (1387 aa).

The interval 1–23 (MAPGCKSELRNVTNSHSNQPSNE) is disordered. The segment covering 10 to 22 (RNVTNSHSNQPSN) has biased composition (polar residues). The region spanning 26-363 (AIKVFVRIRP…LNFAQRAKLI (338 aa)) is the Kinesin motor domain. Residue 109–116 (GQTGSGKT) coordinates ATP. A coiled-coil region spans residues 368–1132 (VVNEDTQGNV…LKMRQLEHVM (765 aa)). Ser-568 is subject to Phosphoserine. Lys-1009 is modified (N6-acetyllysine). Residues Ser-1141 and Ser-1169 each carry the phosphoserine modification.

Belongs to the TRAFAC class myosin-kinesin ATPase superfamily. Kinesin family. KLP2 subfamily. Interacts with MKI67 and TPX2. As to expression, expressed in brain (neurons in the external germinal layer of the cerebellum and in ventricular zones) (at protein level). Expressed in spleen and testis.

Its subcellular location is the cytoplasm. The protein resides in the cytoskeleton. The protein localises to the spindle. Functionally, plus-end directed kinesin-like motor enzyme involved in mitotic spindle assembly. The chain is Kinesin-like protein KIF15 (Kif15) from Mus musculus (Mouse).